A 369-amino-acid chain; its full sequence is DNA replication and repair protein RecF (369 aa).

Gly-30 to Thr-37 contributes to the ATP binding site.

The protein belongs to the RecF family.

It localises to the cytoplasm. Its function is as follows. The RecF protein is involved in DNA metabolism; it is required for DNA replication and normal SOS inducibility. RecF binds preferentially to single-stranded, linear DNA. It also seems to bind ATP. The polypeptide is DNA replication and repair protein RecF (Streptococcus equi subsp. equi (strain 4047)).